Here is a 306-residue protein sequence, read N- to C-terminus: Phospho-N-acetylmuramoyl-pentapeptide-transferase (306 aa).

The next 10 membrane-spanning stretches (helical) occupy residues 2-22, 47-67, 71-91, 105-125, 131-151, 162-182, 185-205, 209-229, 236-256, and 284-304; these read IALL…LKYW, SGTP…FLFF, FFIS…DLKL, IFLS…DYKI, LIID…IAVP, GLAG…SFHF, IALE…FNSH, IFMG…LSVV, LIFL…QVFF, and IVWR…VLWY.

The protein belongs to the glycosyltransferase 4 family. MraY subfamily. It depends on Mg(2+) as a cofactor.

It localises to the cell inner membrane. It catalyses the reaction UDP-N-acetyl-alpha-D-muramoyl-L-alanyl-gamma-D-glutamyl-meso-2,6-diaminopimeloyl-D-alanyl-D-alanine + di-trans,octa-cis-undecaprenyl phosphate = di-trans,octa-cis-undecaprenyl diphospho-N-acetyl-alpha-D-muramoyl-L-alanyl-D-glutamyl-meso-2,6-diaminopimeloyl-D-alanyl-D-alanine + UMP. Its pathway is cell wall biogenesis; peptidoglycan biosynthesis. In terms of biological role, catalyzes the initial step of the lipid cycle reactions in the biosynthesis of the cell wall peptidoglycan: transfers peptidoglycan precursor phospho-MurNAc-pentapeptide from UDP-MurNAc-pentapeptide onto the lipid carrier undecaprenyl phosphate, yielding undecaprenyl-pyrophosphoryl-MurNAc-pentapeptide, known as lipid I. The polypeptide is Phospho-N-acetylmuramoyl-pentapeptide-transferase (Dictyoglomus thermophilum (strain ATCC 35947 / DSM 3960 / H-6-12)).